The primary structure comprises 350 residues: S-adenosylmethionine:tRNA ribosyltransferase-isomerase (350 aa).

Belongs to the QueA family. In terms of assembly, monomer.

It localises to the cytoplasm. It catalyses the reaction 7-aminomethyl-7-carbaguanosine(34) in tRNA + S-adenosyl-L-methionine = epoxyqueuosine(34) in tRNA + adenine + L-methionine + 2 H(+). Its pathway is tRNA modification; tRNA-queuosine biosynthesis. Its function is as follows. Transfers and isomerizes the ribose moiety from AdoMet to the 7-aminomethyl group of 7-deazaguanine (preQ1-tRNA) to give epoxyqueuosine (oQ-tRNA). The polypeptide is S-adenosylmethionine:tRNA ribosyltransferase-isomerase (Bacillus cereus (strain 03BB102)).